The sequence spans 703 residues: Neoverrucotoxin subunit alpha (703 aa).

Residue S2 is modified to N-acetylserine. One can recognise a B30.2/SPRY domain in the interval 508 to 703 (PRMPFVQGYK…RFDHGTVRLL (196 aa)).

The protein belongs to the SNTX/VTX toxin family. In terms of assembly, heterodimer of alpha and beta subunits. In terms of processing, not glycosylated. Four intrachain disulfide linkages are present in the heterodimer. No interchain disulfide bound links the two subunits. As to expression, expressed by the venom gland.

Its subcellular location is the secreted. Has hemolytic and lethal activities. Its hemolytic activity is inhibited by anionic lipids, especially potently by cardiolipin. The polypeptide is Neoverrucotoxin subunit alpha (Synanceia verrucosa (Reef stonefish)).